The primary structure comprises 158 residues: Peptide deformylase (158 aa).

Cysteine 88 and histidine 130 together coordinate Fe cation. Glutamate 131 is an active-site residue. Histidine 134 lines the Fe cation pocket.

Belongs to the polypeptide deformylase family. Fe(2+) is required as a cofactor.

It catalyses the reaction N-terminal N-formyl-L-methionyl-[peptide] + H2O = N-terminal L-methionyl-[peptide] + formate. Removes the formyl group from the N-terminal Met of newly synthesized proteins. Requires at least a dipeptide for an efficient rate of reaction. N-terminal L-methionine is a prerequisite for activity but the enzyme has broad specificity at other positions. In Agathobacter rectalis (strain ATCC 33656 / DSM 3377 / JCM 17463 / KCTC 5835 / VPI 0990) (Eubacterium rectale), this protein is Peptide deformylase.